The following is an 80-amino-acid chain: Penaeidin-3 (80 aa).

The N-terminal stretch at 1–19 (MRLVVCLVYLVSFALVCQG) is a signal peptide. Gln-20 bears the Pyrrolidone carboxylic acid mark. Disulfide bonds link Cys-54-Cys-67, Cys-57-Cys-74, and Cys-68-Cys-75.

This sequence belongs to the penaeidin family. Post-translationally, the N-terminus forms pyrrolidone carboxylic acid. As to expression, strongly expressed in hemocytes, and to a lesser extent in heart, muscle, gills, intestine and eyestalk. Lowest expression in hepatopancreas.

The protein resides in the cytoplasmic granule. In terms of biological role, antibacterial and antifungal activity. Presents chitin-binding activity. This chain is Penaeidin-3, found in Penaeus indicus (Indian white prawn).